The sequence spans 222 residues: Pyridoxine/pyridoxamine 5'-phosphate oxidase (222 aa).

Substrate-binding positions include 14–17 and lysine 71; that span reads RRNY. Residues 66-71, 81-82, arginine 87, lysine 88, and glutamine 110 contribute to the FMN site; these read RTVLLK and FT. 3 residues coordinate substrate: tyrosine 128, arginine 132, and serine 136. Residues 145–146 and tryptophan 190 each bind FMN; that span reads QS. A substrate-binding site is contributed by 196–198; it reads RLN. Arginine 200 is an FMN binding site.

Belongs to the pyridoxamine 5'-phosphate oxidase family. Homodimer. Requires FMN as cofactor.

It carries out the reaction pyridoxamine 5'-phosphate + O2 + H2O = pyridoxal 5'-phosphate + H2O2 + NH4(+). The enzyme catalyses pyridoxine 5'-phosphate + O2 = pyridoxal 5'-phosphate + H2O2. It participates in cofactor metabolism; pyridoxal 5'-phosphate salvage; pyridoxal 5'-phosphate from pyridoxamine 5'-phosphate: step 1/1. Its pathway is cofactor metabolism; pyridoxal 5'-phosphate salvage; pyridoxal 5'-phosphate from pyridoxine 5'-phosphate: step 1/1. Its function is as follows. Catalyzes the oxidation of either pyridoxine 5'-phosphate (PNP) or pyridoxamine 5'-phosphate (PMP) into pyridoxal 5'-phosphate (PLP). This chain is Pyridoxine/pyridoxamine 5'-phosphate oxidase, found in Prochlorococcus marinus (strain MIT 9303).